The chain runs to 422 residues: L-threonine dehydratase biosynthetic IlvA (422 aa).

At Lys-56 the chain carries N6-(pyridoxal phosphate)lysine. Residues Asn-83, 189–193 (GGGGL), and Ser-315 contribute to the pyridoxal 5'-phosphate site. Positions 339–413 (HYFILNFPQR…FDKSNIYINE (75 aa)) constitute an ACT-like domain.

The protein belongs to the serine/threonine dehydratase family. In terms of assembly, homotetramer. Pyridoxal 5'-phosphate is required as a cofactor.

The catalysed reaction is L-threonine = 2-oxobutanoate + NH4(+). The protein operates within amino-acid biosynthesis; L-isoleucine biosynthesis; 2-oxobutanoate from L-threonine: step 1/1. In terms of biological role, catalyzes the anaerobic formation of alpha-ketobutyrate and ammonia from threonine in a two-step reaction. The first step involved a dehydration of threonine and a production of enamine intermediates (aminocrotonate), which tautomerizes to its imine form (iminobutyrate). Both intermediates are unstable and short-lived. The second step is the nonenzymatic hydrolysis of the enamine/imine intermediates to form 2-ketobutyrate and free ammonia. In the low water environment of the cell, the second step is accelerated by RidA. The protein is L-threonine dehydratase biosynthetic IlvA (ilvA) of Staphylococcus saprophyticus subsp. saprophyticus (strain ATCC 15305 / DSM 20229 / NCIMB 8711 / NCTC 7292 / S-41).